Here is a 179-residue protein sequence, read N- to C-terminus: ATP synthase subunit delta (179 aa).

Belongs to the ATPase delta chain family. As to quaternary structure, F-type ATPases have 2 components, F(1) - the catalytic core - and F(0) - the membrane proton channel. F(1) has five subunits: alpha(3), beta(3), gamma(1), delta(1), epsilon(1). F(0) has three main subunits: a(1), b(2) and c(10-14). The alpha and beta chains form an alternating ring which encloses part of the gamma chain. F(1) is attached to F(0) by a central stalk formed by the gamma and epsilon chains, while a peripheral stalk is formed by the delta and b chains.

It is found in the cell membrane. F(1)F(0) ATP synthase produces ATP from ADP in the presence of a proton or sodium gradient. F-type ATPases consist of two structural domains, F(1) containing the extramembraneous catalytic core and F(0) containing the membrane proton channel, linked together by a central stalk and a peripheral stalk. During catalysis, ATP synthesis in the catalytic domain of F(1) is coupled via a rotary mechanism of the central stalk subunits to proton translocation. Functionally, this protein is part of the stalk that links CF(0) to CF(1). It either transmits conformational changes from CF(0) to CF(1) or is implicated in proton conduction. This Staphylococcus haemolyticus (strain JCSC1435) protein is ATP synthase subunit delta.